We begin with the raw amino-acid sequence, 155 residues long: Large ribosomal subunit protein uL22 (155 aa).

It belongs to the universal ribosomal protein uL22 family. As to quaternary structure, part of the 50S ribosomal subunit.

This protein binds specifically to 23S rRNA. It makes multiple contacts with different domains of the 23S rRNA in the assembled 50S subunit and ribosome. Functionally, the globular domain of the protein is located near the polypeptide exit tunnel on the outside of the subunit, while an extended beta-hairpin is found that lines the wall of the exit tunnel in the center of the 70S ribosome. This is Large ribosomal subunit protein uL22 from Pyrococcus furiosus (strain ATCC 43587 / DSM 3638 / JCM 8422 / Vc1).